The primary structure comprises 148 residues: MKVALGGTFEPLHEGHKKLIDVAIKLGGRDITIGVTSDRMARARIRSVLPFAIRAENVKRYVMRKYGFEPEIVKITNPYGKTLDVDFEYLVVSPETYEMALKINQKREELGKRKITIVKVDWMMAEDGKPISSTRIKRGEIDRYGGII.

It belongs to the eukaryotic CoaD family.

The protein resides in the cytoplasm. It catalyses the reaction (R)-4'-phosphopantetheine + ATP + H(+) = 3'-dephospho-CoA + diphosphate. It functions in the pathway cofactor biosynthesis; coenzyme A biosynthesis. Its function is as follows. Reversibly transfers an adenylyl group from ATP to 4'-phosphopantetheine, yielding dephospho-CoA (dPCoA) and pyrophosphate. This Archaeoglobus fulgidus (strain ATCC 49558 / DSM 4304 / JCM 9628 / NBRC 100126 / VC-16) protein is Phosphopantetheine adenylyltransferase.